The sequence spans 175 residues: Shikimate kinase (175 aa).

G12 to T17 serves as a coordination point for ATP. Mg(2+) is bound at residue T16. Substrate is bound by residues D34, R58, and G80. R117 contacts ATP. A substrate-binding site is contributed by R136.

This sequence belongs to the shikimate kinase family. Monomer. The cofactor is Mg(2+).

It localises to the cytoplasm. It catalyses the reaction shikimate + ATP = 3-phosphoshikimate + ADP + H(+). It functions in the pathway metabolic intermediate biosynthesis; chorismate biosynthesis; chorismate from D-erythrose 4-phosphate and phosphoenolpyruvate: step 5/7. Catalyzes the specific phosphorylation of the 3-hydroxyl group of shikimic acid using ATP as a cosubstrate. This chain is Shikimate kinase, found in Saccharopolyspora erythraea (strain ATCC 11635 / DSM 40517 / JCM 4748 / NBRC 13426 / NCIMB 8594 / NRRL 2338).